Reading from the N-terminus, the 61-residue chain is Small ribosomal subunit protein uS14 (61 aa).

Zn(2+) is bound by residues C24, C27, C40, and C43.

It belongs to the universal ribosomal protein uS14 family. Zinc-binding uS14 subfamily. As to quaternary structure, part of the 30S ribosomal subunit. Contacts proteins S3 and S10. Zn(2+) is required as a cofactor.

Binds 16S rRNA, required for the assembly of 30S particles and may also be responsible for determining the conformation of the 16S rRNA at the A site. The protein is Small ribosomal subunit protein uS14 of Ureaplasma parvum serovar 3 (strain ATCC 27815 / 27 / NCTC 11736).